The sequence spans 481 residues: Putative cytochrome P450 520B1 (481 aa).

Cys-427 provides a ligand contact to heme.

It belongs to the cytochrome P450 family. Heme serves as cofactor.

The polypeptide is Putative cytochrome P450 520B1 (cyp520B1) (Dictyostelium discoideum (Social amoeba)).